Here is a 306-residue protein sequence, read N- to C-terminus: Probable dimethyladenosine transferase (306 aa).

6 residues coordinate S-adenosyl-L-methionine: H30, L32, G57, E78, D106, and N121.

It belongs to the class I-like SAM-binding methyltransferase superfamily. rRNA adenine N(6)-methyltransferase family. In terms of assembly, part of the small subunit (SSU) processome, composed of more than 70 proteins and the RNA chaperone small nucleolar RNA (snoRNA) U3.

The protein localises to the nucleus. It localises to the nucleolus. It carries out the reaction adenosine(1779)/adenosine(1780) in 18S rRNA + 4 S-adenosyl-L-methionine = N(6)-dimethyladenosine(1779)/N(6)-dimethyladenosine(1780) in 18S rRNA + 4 S-adenosyl-L-homocysteine + 4 H(+). Functionally, specifically dimethylates two adjacent adenosines in the loop of a conserved hairpin near the 3'-end of 18S rRNA in the 40S particle. Involved in the pre-rRNA processing steps leading to small-subunit rRNA production independently of its RNA-modifying catalytic activity. Part of the small subunit (SSU) processome, first precursor of the small eukaryotic ribosomal subunit. During the assembly of the SSU processome in the nucleolus, many ribosome biogenesis factors, an RNA chaperone and ribosomal proteins associate with the nascent pre-rRNA and work in concert to generate RNA folding, modifications, rearrangements and cleavage as well as targeted degradation of pre-ribosomal RNA by the RNA exosome. This is Probable dimethyladenosine transferase from Drosophila melanogaster (Fruit fly).